Reading from the N-terminus, the 647-residue chain is LIM domain kinase 1 (647 aa).

LIM zinc-binding domains are found at residues 25-75 and 84-137; these read CASC…CKKD and CHGC…CGHC. One can recognise a PDZ domain in the interval 165 to 258; the sequence is LVSIPASSHG…LLQLTLEHDP (94 aa). The residue at position 210 (S210) is a Phosphoserine. The residue at position 229 (T229) is a Phosphothreonine. The segment at 260 to 319 is disordered; the sequence is DTLGHGLGPETSPLSSPAYTPSGEAGSSARQKPVLRSCSIDRSPGAGSLGSPASQRKDLG. A phosphoserine mark is found at S298, S302, S307, and S310. A compositionally biased stretch (low complexity) spans 302–313; sequence SPGAGSLGSPAS. S323 carries the phosphoserine; by MAPKAPK2 modification. S337 bears the Phosphoserine mark. Positions 339-604 constitute a Protein kinase domain; it reads LIHGEVLGKG…PSFVKLEHWL (266 aa). ATP is bound by residues 345–353 and K368; that span reads LGKGCFGQA. Residue D460 is part of the active site. A Phosphothreonine; by ROCK1 and PAK1 modification is found at T508.

The protein belongs to the protein kinase superfamily. TKL Ser/Thr protein kinase family. Interacts (via LIM domain) with the cytoplasmic domain of NRG1. Interacts with NISCH. Interacts with RLIM and RNF6. Self-associates to form homodimers. Interacts with HSP90AA1; this interaction promotes LIMK1 dimerization and subsequent transphosphorylation. Interacts with CDKN1C. Interacts with SSH1. Interacts with ROCK1. Interacts (via LIM zinc-binding domains) with FAM89B/LRAP25 (via LRR repeat). Forms a tripartite complex with CDC42BPA, CDC42BPB and FAM89B/LRAP25. Post-translationally, autophosphorylated. Phosphorylated on Thr-508 by ROCK1 and PAK1, resulting in activation. Phosphorylated by PAK4 which increases the ability of LIMK1 to phosphorylate cofilin. Phosphorylated at Ser-323 by MAPKAPK2 during activation of VEGFA-induced signaling, which results in activation of LIMK1 and promotion of actin reorganization, cell migration, and tubule formation of endothelial cells. Dephosphorylated and inactivated by SSH1. Phosphorylated by CDC42BP. In terms of processing, ubiquitinated. 'Lys-48'-linked polyubiquitination by RNF6 leads to proteasomal degradation through the 26S proteasome, modulating LIMK1 levels in the growth cone and its effect on axonal outgrowth. Also polyubiquitinated by RLIM. As to expression, highest expression in both adult and fetal nervous system. Detected ubiquitously throughout the different regions of adult brain, with highest levels in the cerebral cortex. Expressed to a lesser extent in heart and skeletal muscle.

The protein resides in the cytoplasm. It is found in the nucleus. Its subcellular location is the cytoskeleton. It localises to the cell projection. The protein localises to the lamellipodium. It carries out the reaction L-seryl-[protein] + ATP = O-phospho-L-seryl-[protein] + ADP + H(+). The enzyme catalyses L-threonyl-[protein] + ATP = O-phospho-L-threonyl-[protein] + ADP + H(+). Functionally, serine/threonine-protein kinase that plays an essential role in the regulation of actin filament dynamics. Acts downstream of several Rho family GTPase signal transduction pathways. Activated by upstream kinases including ROCK1, PAK1 and PAK4, which phosphorylate LIMK1 on a threonine residue located in its activation loop. LIMK1 subsequently phosphorylates and inactivates the actin binding/depolymerizing factors cofilin-1/CFL1, cofilin-2/CFL2 and destrin/DSTN, thereby preventing the cleavage of filamentous actin (F-actin), and stabilizing the actin cytoskeleton. In this way LIMK1 regulates several actin-dependent biological processes including cell motility, cell cycle progression, and differentiation. Phosphorylates TPPP on serine residues, thereby promoting microtubule disassembly. Stimulates axonal outgrowth and may be involved in brain development. Its function is as follows. Has a dominant negative effect on actin cytoskeletal changes. Required for atypical chemokine receptor ACKR2-induced phosphorylation of cofilin (CFL1). The sequence is that of LIM domain kinase 1 (LIMK1) from Homo sapiens (Human).